Consider the following 243-residue polypeptide: Ubiquinone/menaquinone biosynthesis C-methyltransferase UbiE (243 aa).

S-adenosyl-L-methionine contacts are provided by residues Thr69, Asp90, and Asp116 to Ala117.

It belongs to the class I-like SAM-binding methyltransferase superfamily. MenG/UbiE family.

The enzyme catalyses a 2-demethylmenaquinol + S-adenosyl-L-methionine = a menaquinol + S-adenosyl-L-homocysteine + H(+). It catalyses the reaction a 2-methoxy-6-(all-trans-polyprenyl)benzene-1,4-diol + S-adenosyl-L-methionine = a 5-methoxy-2-methyl-3-(all-trans-polyprenyl)benzene-1,4-diol + S-adenosyl-L-homocysteine + H(+). Its pathway is quinol/quinone metabolism; menaquinone biosynthesis; menaquinol from 1,4-dihydroxy-2-naphthoate: step 2/2. The protein operates within cofactor biosynthesis; ubiquinone biosynthesis. Methyltransferase required for the conversion of demethylmenaquinol (DMKH2) to menaquinol (MKH2) and the conversion of 2-polyprenyl-6-methoxy-1,4-benzoquinol (DDMQH2) to 2-polyprenyl-3-methyl-6-methoxy-1,4-benzoquinol (DMQH2). This Paraburkholderia phymatum (strain DSM 17167 / CIP 108236 / LMG 21445 / STM815) (Burkholderia phymatum) protein is Ubiquinone/menaquinone biosynthesis C-methyltransferase UbiE.